The primary structure comprises 195 residues: Putative 3-methyladenine DNA glycosylase (195 aa).

It belongs to the DNA glycosylase MPG family.

In Synechococcus sp. (strain JA-3-3Ab) (Cyanobacteria bacterium Yellowstone A-Prime), this protein is Putative 3-methyladenine DNA glycosylase.